The primary structure comprises 365 residues: Alanine racemase (365 aa).

Lys-35 functions as the Proton acceptor; specific for D-alanine in the catalytic mechanism. At Lys-35 the chain carries N6-(pyridoxal phosphate)lysine. Arg-130 is a binding site for substrate. Tyr-256 acts as the Proton acceptor; specific for L-alanine in catalysis. Met-304 is a substrate binding site.

Belongs to the alanine racemase family. Pyridoxal 5'-phosphate is required as a cofactor.

It carries out the reaction L-alanine = D-alanine. It participates in amino-acid biosynthesis; D-alanine biosynthesis; D-alanine from L-alanine: step 1/1. Catalyzes the interconversion of L-alanine and D-alanine. May also act on other amino acids. The sequence is that of Alanine racemase (alr) from Polaromonas naphthalenivorans (strain CJ2).